The chain runs to 471 residues: Histone deacetylase 6 (471 aa).

N-acetylmethionine is present on Met-1. Positions 20–333 (RVSYFYEPTI…WCYETAVAVG (314 aa)) are histone deacetylase. His-153 serves as the catalytic Proton donor/acceptor. Positions 188, 190, and 276 each coordinate Zn(2+). Residues 389-471 (PSVQFQHTPP…PEPDVNPPSS (83 aa)) are disordered. Acidic residues predominate over residues 453–463 (GEDEMDDDNPE).

Belongs to the histone deacetylase family. HD type 1 subfamily. Interacts with Coi1, which functions in an SCF complex that recruits regulators for ubiquitination. Interacts with AHL22. Interacts with AS1. Part of the AS1 repressor complex composed of AS1, LBD6/AS2 and HDA6. Binds to EBS and SHL. Interacts with MBD6. Interacts with HDA5. Interacts with FLD. It depends on Zn(2+) as a cofactor. As to expression, not detected in leaves, stems, flowers and young siliques.

It is found in the nucleus. It localises to the nucleolus. It carries out the reaction N(6)-acetyl-L-lysyl-[histone] + H2O = L-lysyl-[histone] + acetate. With respect to regulation, inhibited by trichostatin A. Functionally, responsible for the deacetylation of lysine residues on the N-terminal part of the core histones (H2A, H2B, H3 and H4). Might remove acetyl residues only from specific targets, such as rDNA repeats or complex transgenes. Histone deacetylation gives a tag for epigenetic repression and plays an important role in transcriptional regulation, cell cycle progression and developmental events. Histone deacetylases act via the formation of large multiprotein complexes. Required for rRNA gene silencing in nucleolar dominance. Plays a role in transgene silencing, but this effect seems to bee independent of the histone deacetylase activity. Part of the AS1 repressor complex to regulate the KNOX expression in leaf development. Binds to KNAT1, KNAT2, and KNATM chromatin. Involved in the regulation of flowering time. Forms a histone deacetylase complex with HDA5, FLD and MSI4/FVE that represses FLC gene expression to control flowering time. In Arabidopsis thaliana (Mouse-ear cress), this protein is Histone deacetylase 6.